The following is a 154-amino-acid chain: Cytochrome c-type biogenesis protein CcmE (154 aa).

Topologically, residues 1–8 (MTPQRKRR) are cytoplasmic. Residues 9–29 (LVMLAALAGGVGVAVALALAA) traverse the membrane as a helical; Signal-anchor for type II membrane protein segment. The Periplasmic segment spans residues 30 to 154 (LQQNINLFYS…GGTPAAEPQP (125 aa)). Heme-binding residues include H124 and Y128. The segment at 130 to 154 (PPEAAHALKQGAATSGGTPAAEPQP) is disordered.

This sequence belongs to the CcmE/CycJ family.

Its subcellular location is the cell inner membrane. In terms of biological role, heme chaperone required for the biogenesis of c-type cytochromes. Transiently binds heme delivered by CcmC and transfers the heme to apo-cytochromes in a process facilitated by CcmF and CcmH. The chain is Cytochrome c-type biogenesis protein CcmE from Bordetella petrii (strain ATCC BAA-461 / DSM 12804 / CCUG 43448).